A 149-amino-acid chain; its full sequence is Protein E6 (149 aa).

Zinc fingers lie at residues 30-66 (CVEC…CKLC) and 103-139 (CIIC…CAAC). Positions 147–149 (TAL) match the PDZ-binding domain motif.

It belongs to the papillomaviridae E6 protein family. As to quaternary structure, forms homodimers. Interacts with ubiquitin-protein ligase UBE3A/E6-AP and thus forms a complex with human TP53. Interacts with human NFX1 and MAGI3. Interacts with human IRF3; this interaction inhibits the establishment of antiviral state. Interacts with human TYK2; this interaction inhibits JAK-STAT activation by interferon alpha. Interacts with host DLG1; this interaction leads to the proteasomal degradation of DLG1.

The protein resides in the host cytoplasm. It localises to the host nucleus. In terms of biological role, this protein may be involved in the oncogenic potential of this virus (cervical neoplasia-associated virus). Its function is as follows. Plays a major role in the induction and maintenance of cellular transformation. Acts mainly as an oncoprotein by stimulating the destruction of many host cell key regulatory proteins. E6 associates with host UBE3A/E6-AP ubiquitin-protein ligase, and inactivates tumor suppressors TP53 and TP73 by targeting them to the 26S proteasome for degradation. In turn, DNA damage and chromosomal instabilities increase and lead to cell proliferation and cancer development. The complex E6/E6AP targets several other substrates to degradation via the proteasome including host DLG1 or NFX1, a repressor of human telomerase reverse transcriptase (hTERT). The resulting increased expression of hTERT prevents the shortening of telomere length leading to cell immortalization. Other cellular targets including BAK1, Fas-associated death domain-containing protein (FADD) and procaspase 8, are degraded by E6/E6AP causing inhibition of apoptosis. E6 also inhibits immune response by interacting with host IRF3 and TYK2. These interactions prevent IRF3 transcriptional activities and inhibit TYK2-mediated JAK-STAT activation by interferon alpha resulting in inhibition of the interferon signaling pathway. The protein is Protein E6 of Homo sapiens (Human).